The following is a 353-amino-acid chain: 41 kDa protein (353 aa).

The segment at 132 to 197 (QSSHASALEQ…DNNSSDTIKD (66 aa)) is disordered. The segment covering 157–169 (LDNKGKSDSENCN) has biased composition (basic and acidic residues).

In Lactobacillus helveticus (Lactobacillus suntoryeus), this protein is 41 kDa protein.